Consider the following 396-residue polypeptide: Subtelomeric hrmA-associated cluster protein AFUB_079040 (396 aa).

Disordered regions lie at residues 1–32 (MANK…QQSL) and 347–396 (YPEN…ECGR). The segment covering 23–32 (SHASGSQQSL) has biased composition (polar residues). Residues 367 to 380 (SKKKKDKKKKKSNK) show a composition bias toward basic residues.

Part of the subtelomeric hrmA-associated cluster (HAC) containing genes that alter the hyphal surface (such as reduced total chitin or increased beta-glucan exposure) and perturb inter-hyphal interactions within the developing biofilms, resulting in a loss of vertically aligned polarized growing filaments. Consequently, this hypoxia-typic morphotype (called H-MORPH) with altered biofilm architecture leads to increased hypoxia fitness, increased host inflammation, rapid disease progression, and mortality in a murine model of invasive aspergillosis. This chain is Subtelomeric hrmA-associated cluster protein AFUB_079040, found in Aspergillus fumigatus (strain CBS 144.89 / FGSC A1163 / CEA10) (Neosartorya fumigata).